Reading from the N-terminus, the 309-residue chain is Glutaminase (309 aa).

Ser-64, Asn-114, Glu-160, Asn-167, Tyr-191, Tyr-243, and Val-261 together coordinate substrate.

The protein belongs to the glutaminase family. Homotetramer.

It catalyses the reaction L-glutamine + H2O = L-glutamate + NH4(+). This Rhizobium leguminosarum bv. trifolii (strain WSM2304) protein is Glutaminase.